The primary structure comprises 493 residues: Glutamyl-tRNA(Gln) amidotransferase subunit A (493 aa).

Residues Lys79 and Ser159 each act as charge relay system in the active site. The active-site Acyl-ester intermediate is Ser183.

This sequence belongs to the amidase family. GatA subfamily. As to quaternary structure, heterotrimer of A, B and C subunits.

The catalysed reaction is L-glutamyl-tRNA(Gln) + L-glutamine + ATP + H2O = L-glutaminyl-tRNA(Gln) + L-glutamate + ADP + phosphate + H(+). Functionally, allows the formation of correctly charged Gln-tRNA(Gln) through the transamidation of misacylated Glu-tRNA(Gln) in organisms which lack glutaminyl-tRNA synthetase. The reaction takes place in the presence of glutamine and ATP through an activated gamma-phospho-Glu-tRNA(Gln). This Brucella ovis (strain ATCC 25840 / 63/290 / NCTC 10512) protein is Glutamyl-tRNA(Gln) amidotransferase subunit A.